The following is a 180-amino-acid chain: Ribulose bisphosphate carboxylase small subunit, chloroplastic (180 aa).

The N-terminal 56 residues, 1–56 (MALISSAAVTTVNRASSAQANLVAPFTGLKSSAGFPVTKKTNNDITSIASNGGRVN), are a transit peptide targeting the chloroplast.

It belongs to the RuBisCO small chain family. Heterohexadecamer of 8 large and 8 small subunits.

The protein resides in the plastid. The protein localises to the chloroplast. Its function is as follows. RuBisCO catalyzes two reactions: the carboxylation of D-ribulose 1,5-bisphosphate, the primary event in carbon dioxide fixation, as well as the oxidative fragmentation of the pentose substrate. Both reactions occur simultaneously and in competition at the same active site. Although the small subunit is not catalytic it is essential for maximal activity. In Medicago sativa (Alfalfa), this protein is Ribulose bisphosphate carboxylase small subunit, chloroplastic.